A 260-amino-acid polypeptide reads, in one-letter code: Dehydrogenase/reductase SDR family member 11 (260 aa).

An N-terminal signal peptide occupies residues 1–30 (MTRAGMERWRDRLALVTGASGGIGAAVARA). NADP(+)-binding positions include 18–23 (GASGGI), 43–44 (RT), Glu-49, 70–71 (DL), and Asn-97. Positions 151 and 166 each coordinate substrate. Residues Tyr-166, Lys-170, 201-204 (VETQ), and Lys-208 contribute to the NADP(+) site. Residue Tyr-166 is the Proton acceptor of the active site.

Belongs to the short-chain dehydrogenases/reductases (SDR) family. As to quaternary structure, homotetramer.

It localises to the secreted. It catalyses the reaction a 3beta-hydroxysteroid + NADP(+) = a 3-oxosteroid + NADPH + H(+). The catalysed reaction is 17beta-estradiol + NAD(+) = estrone + NADH + H(+). It carries out the reaction 17beta-estradiol + NADP(+) = estrone + NADPH + H(+). Its pathway is steroid biosynthesis; estrogen biosynthesis. With respect to regulation, inhibited by flavonoids including apigenin, luteolin, genistein, kaempferol and quercetin and also by carbenoxolone, zearalenone, glycyrrhetinic, curcumin and flufenamic acid. Functionally, catalyzes the conversion of the 17-keto group of estrone, 4- and 5-androstenes and 5-alpha-androstanes into their 17-beta-hydroxyl metabolites and the conversion of the 3-keto group of 3-, 3,17- and 3,20- diketosteroids into their 3-hydroxyl metabolites. Exhibits reductive 3-beta-hydroxysteroid dehydrogenase activity toward 5-beta-androstanes, 5-beta-pregnanes, 4-pregnenes and bile acids. May also reduce endogenous and exogenous alpha-dicarbonyl compounds and xenobiotic alicyclic ketones. In Mus musculus (Mouse), this protein is Dehydrogenase/reductase SDR family member 11 (Dhrs11).